The following is a 293-amino-acid chain: Coatomer subunit epsilon-2 (293 aa).

It belongs to the COPE family. As to quaternary structure, oligomeric complex that consists of at least the alpha, beta, beta', gamma, delta, epsilon and zeta subunits.

The protein localises to the cytoplasm. The protein resides in the golgi apparatus membrane. It is found in the cytoplasmic vesicle. It localises to the COPI-coated vesicle membrane. The coatomer is a cytosolic protein complex that binds to dilysine motifs and reversibly associates with Golgi non-clathrin-coated vesicles, which further mediate biosynthetic protein transport from the ER, via the Golgi up to the trans Golgi network. The coatomer complex is required for budding from Golgi membranes, and is essential for the retrograde Golgi-to-ER transport of dilysine-tagged proteins. This Arabidopsis thaliana (Mouse-ear cress) protein is Coatomer subunit epsilon-2.